A 292-amino-acid chain; its full sequence is MTFQDLILALQGYWAQQGCVIQQPYDTEKGAGTFNPATFLRVLGPEPWNVAYVEPSRRPTDGRYGENPNRLQHYYQFQVIMKPSPMNILDLYLDSLRAFGIDPAKHDIRFVEDDWESPTLGAWGLGWEVWLDGMEITQFTYFQQAGGIDLKPVSSEITYGCERIAMYLQGVDNVYDLEWVKGVSYGDIHHRTEVEFSTYNFEEADVDMLLTLFTMYEKECVRLVERGLVLPAYDFVMKCSHTFNLLDARGAISVTERASYIGRVRNVARLCAEGYLKLRESLGFPLLKGGRK.

Belongs to the class-II aminoacyl-tRNA synthetase family. Tetramer of two alpha and two beta subunits.

It is found in the cytoplasm. It catalyses the reaction tRNA(Gly) + glycine + ATP = glycyl-tRNA(Gly) + AMP + diphosphate. This is Glycine--tRNA ligase alpha subunit from Geobacter sulfurreducens (strain ATCC 51573 / DSM 12127 / PCA).